A 947-amino-acid chain; its full sequence is Valine--tRNA ligase (947 aa).

The short motif at 45–55 (PNVTGSLHMGH) is the 'HIGH' region element. The 'KMSKS' region signature appears at 591-595 (KMSKS). K594 contributes to the ATP binding site. Residues 879 to 943 (DLAAEQARLE…ASLRTALTRV (65 aa)) adopt a coiled-coil conformation.

The protein belongs to the class-I aminoacyl-tRNA synthetase family. ValS type 1 subfamily. As to quaternary structure, monomer.

Its subcellular location is the cytoplasm. The catalysed reaction is tRNA(Val) + L-valine + ATP = L-valyl-tRNA(Val) + AMP + diphosphate. Functionally, catalyzes the attachment of valine to tRNA(Val). As ValRS can inadvertently accommodate and process structurally similar amino acids such as threonine, to avoid such errors, it has a 'posttransfer' editing activity that hydrolyzes mischarged Thr-tRNA(Val) in a tRNA-dependent manner. The protein is Valine--tRNA ligase of Agrobacterium fabrum (strain C58 / ATCC 33970) (Agrobacterium tumefaciens (strain C58)).